The primary structure comprises 293 residues: 4-hydroxy-tetrahydrodipicolinate synthase (293 aa).

Thr-45 provides a ligand contact to pyruvate. Tyr-133 acts as the Proton donor/acceptor in catalysis. Lys-162 (schiff-base intermediate with substrate) is an active-site residue. Ile-204 serves as a coordination point for pyruvate.

This sequence belongs to the DapA family. Homotetramer; dimer of dimers.

The protein resides in the cytoplasm. The enzyme catalyses L-aspartate 4-semialdehyde + pyruvate = (2S,4S)-4-hydroxy-2,3,4,5-tetrahydrodipicolinate + H2O + H(+). It participates in amino-acid biosynthesis; L-lysine biosynthesis via DAP pathway; (S)-tetrahydrodipicolinate from L-aspartate: step 3/4. Catalyzes the condensation of (S)-aspartate-beta-semialdehyde [(S)-ASA] and pyruvate to 4-hydroxy-tetrahydrodipicolinate (HTPA). The polypeptide is 4-hydroxy-tetrahydrodipicolinate synthase (Mesorhizobium japonicum (strain LMG 29417 / CECT 9101 / MAFF 303099) (Mesorhizobium loti (strain MAFF 303099))).